Consider the following 669-residue polypeptide: MDQRKPPATEEGWYALHDCRSIDWDAWREAPQRVRDRALSEGIGFLDAYEAVEDADEGQTAVYTVMGHKADIMILHLRPTMGDLDAAERHFEQTEFAAFTEQEFSYVSVTEASGYTEKSREYFEGEVDDDSGLAQYIQARLHPDVPDEEFVCFYPMSKRRQPDQNWYDTSFEERAAHIKRHGDIGRGYGSEVSQMIAGSIGFDDWEWGITLWSDDMRHIKELLTEMRFDPSTSQFAEFGPFYVGRKFDPSELPAVLAGQRVPTDDASVPETPADVAEHEHAPADAGASHSHAEEPTASGAQTGAHAGGDTDSHGGTHPGSASEGDHPHSEESSDEDDSGSSSSSGGRPDVSADFEEIDDAAQRLGRLGLHEGDAYDAGDYALVFHSSADAEDIVDDVSDLESNFDHYDRHVQTAVRADSGQTYVVSIWTAKDAAETAAGFLKDIDGVDEQLGGSLGEGVEGSETADDSDAQAAESSQSIRETLESAGVYAGQPHGEDVYALVVYSEANAETLDEEVTDLRSAFERYDTHVQTTVYGDTDGDVAAVASLWDTEDAAQTASDYLTDLPGVVGRHGEGDGFGTMGMFYTVKPEYHEDFVEKFDTVGGLLKEMDGHRETSLLFNHDDENDMFIASQWDSQKDAMAFFRSDDFSETVDWGRDVLADRPRHVFLA.

Residue His-181 coordinates heme. Disordered regions lie at residues 260-351 and 451-477; these read RVPT…PDVS and LGGSLGEGVEGSETADDSDAQAAESSQ. An ABM domain is found at 579 to 667; it reads GTMGMFYTVK…VLADRPRHVF (89 aa).

The protein in the N-terminal section; belongs to the ChdC family.

This is Putative heme-binding protein rrnAC3100 from Haloarcula marismortui (strain ATCC 43049 / DSM 3752 / JCM 8966 / VKM B-1809) (Halobacterium marismortui).